The primary structure comprises 25 residues: Small ribosomal subunit protein uS19 (25 aa).

The disordered stretch occupies residues glycine 1 to arginine 25.

The protein belongs to the universal ribosomal protein uS19 family.

Functionally, protein S19 forms a complex with S13 that binds strongly to the 16S ribosomal RNA. The chain is Small ribosomal subunit protein uS19 (rpsS) from Acholeplasma laidlawii.